Reading from the N-terminus, the 370-residue chain is Anhydro-N-acetylmuramic acid kinase (370 aa).

12–19 (GTSLDGID) lines the ATP pocket.

The protein belongs to the anhydro-N-acetylmuramic acid kinase family.

The catalysed reaction is 1,6-anhydro-N-acetyl-beta-muramate + ATP + H2O = N-acetyl-D-muramate 6-phosphate + ADP + H(+). Its pathway is amino-sugar metabolism; 1,6-anhydro-N-acetylmuramate degradation. It participates in cell wall biogenesis; peptidoglycan recycling. In terms of biological role, catalyzes the specific phosphorylation of 1,6-anhydro-N-acetylmuramic acid (anhMurNAc) with the simultaneous cleavage of the 1,6-anhydro ring, generating MurNAc-6-P. Is required for the utilization of anhMurNAc either imported from the medium or derived from its own cell wall murein, and thus plays a role in cell wall recycling. In Yersinia enterocolitica serotype O:8 / biotype 1B (strain NCTC 13174 / 8081), this protein is Anhydro-N-acetylmuramic acid kinase.